The chain runs to 344 residues: Phosphate acyltransferase (344 aa).

This sequence belongs to the PlsX family. In terms of assembly, homodimer. Probably interacts with PlsY.

It localises to the cytoplasm. It catalyses the reaction a fatty acyl-[ACP] + phosphate = an acyl phosphate + holo-[ACP]. Its pathway is lipid metabolism; phospholipid metabolism. In terms of biological role, catalyzes the reversible formation of acyl-phosphate (acyl-PO(4)) from acyl-[acyl-carrier-protein] (acyl-ACP). This enzyme utilizes acyl-ACP as fatty acyl donor, but not acyl-CoA. The protein is Phosphate acyltransferase of Cyanothece sp. (strain PCC 7425 / ATCC 29141).